We begin with the raw amino-acid sequence, 138 residues long: Large ribosomal subunit protein uL11c (138 aa).

Belongs to the universal ribosomal protein uL11 family. As to quaternary structure, part of the ribosomal stalk of the 50S ribosomal subunit. Interacts with L10 and the large rRNA to form the base of the stalk. L10 forms an elongated spine to which L12 dimers bind in a sequential fashion forming a multimeric L10(L12)X complex.

Its subcellular location is the plastid. It is found in the chloroplast. Functionally, forms part of the ribosomal stalk which helps the ribosome interact with GTP-bound translation factors. The chain is Large ribosomal subunit protein uL11c from Cyanidioschyzon merolae (strain NIES-3377 / 10D) (Unicellular red alga).